We begin with the raw amino-acid sequence, 160 residues long: Dihydrofolate reductase (160 aa).

Positions 1 to 160 (MLIAIWAMTQ…NVNYYRKKQQ (160 aa)) constitute a DHFR domain. A substrate-binding site is contributed by 5-7 (IWA). NADP(+) is bound by residues 6-7 (WA) and 14-19 (IGNNNT). E27 serves as a coordination point for substrate. 43–46 (GRKT) lines the NADP(+) pocket. R57 provides a ligand contact to substrate. NADP(+)-binding positions include 62-65 (LSKD) and 101-106 (CGGKSV). S120 is a binding site for substrate.

It belongs to the dihydrofolate reductase family.

It carries out the reaction (6S)-5,6,7,8-tetrahydrofolate + NADP(+) = 7,8-dihydrofolate + NADPH + H(+). It functions in the pathway cofactor biosynthesis; tetrahydrofolate biosynthesis; 5,6,7,8-tetrahydrofolate from 7,8-dihydrofolate: step 1/1. Its function is as follows. Key enzyme in folate metabolism. Catalyzes an essential reaction for de novo glycine and purine synthesis, and for DNA precursor synthesis. This chain is Dihydrofolate reductase (folA), found in Mycoplasma genitalium (strain ATCC 33530 / DSM 19775 / NCTC 10195 / G37) (Mycoplasmoides genitalium).